Consider the following 173-residue polypeptide: Putative metal-dependent hydrolase BCG9842_B2589 (173 aa).

Zn(2+)-binding residues include H65, H156, and H160.

Belongs to the metal hydrolase YfiT family. As to quaternary structure, homodimer. Zn(2+) serves as cofactor.

The protein resides in the cytoplasm. Its function is as follows. Possible metal-dependent hydrolase. The sequence is that of Putative metal-dependent hydrolase BCG9842_B2589 from Bacillus cereus (strain G9842).